A 205-amino-acid chain; its full sequence is CD83 antigen (205 aa).

Positions 1 to 19 (MSRGLQLLLLSCAYSLAPA) are cleaved as a signal peptide. One can recognise an Ig-like V-type domain in the interval 20 to 114 (TPEVKVACSE…YRCTLQDPDG (95 aa)). Residues 20 to 144 (TPEVKVACSE…EETFKKYRAE (125 aa)) lie on the Extracellular side of the membrane. A disulfide bridge links Cys35 with Cys107. A compositionally biased stretch (basic and acidic residues) spans 60-69 (METPQEDHLR). The interval 60-81 (METPQEDHLRGQHYHQKGQNGS) is disordered. N-linked (GlcNAc...) asparagine glycans are attached at residues Asn79, Asn96, and Asn117. The chain crosses the membrane as a helical span at residues 145–166 (IVLLLALVIFYLTLIIFTCKFA). The Cytoplasmic segment spans residues 167–205 (RLQSIFPDFSKAGMERAFLPVTSPNKHLGLVTPHKTELV).

Monomer. Homodimer. Homotrimer. Interacts with MARCHF1; this interaction antagonizes MARCHF1-mediated MHC II and CD86 down-regulation. Post-translationally, glycosylated when expressed on activated dendritic cells. As to expression, expressed by activated lymphocytes, Langerhans cells and activatd dendritic cells.

It is found in the membrane. Its function is as follows. Transmembrane glycoprotein predominantly found on the surface of many immune cells including dendritic cells or lymphocytes that plays various roles in immune response regulation. Plays an essential role in CD4(+) T-selection, differentiation and stability by regulating the activity of the major E3 ubiquitin ligase responsible for controlling MHCII trafficking MARCHF8. Also inhibits MARCHF1 association with MHCII or CD86 to prevent their ubiquitination and subsequent degradation. In addition, acts as an important modulator of protective responses against acute infections. The chain is CD83 antigen (CD83) from Homo sapiens (Human).